Here is a 500-residue protein sequence, read N- to C-terminus: Cysteine--tRNA ligase (500 aa).

C29 serves as a coordination point for Zn(2+). The short motif at 31 to 41 (VTVYDLCHLGH) is the 'HIGH' region element. Zn(2+)-binding residues include C213, H238, and E242. The 'KMSKS' region motif lies at 270–274 (KMSKS). K273 provides a ligand contact to ATP.

Belongs to the class-I aminoacyl-tRNA synthetase family. Monomer. Requires Zn(2+) as cofactor.

It is found in the cytoplasm. The catalysed reaction is tRNA(Cys) + L-cysteine + ATP = L-cysteinyl-tRNA(Cys) + AMP + diphosphate. The protein is Cysteine--tRNA ligase of Prochlorococcus marinus (strain NATL1A).